We begin with the raw amino-acid sequence, 394 residues long: Actin-related protein 2 (394 aa).

Residue methionine 1 is modified to N-acetylmethionine. ATP contacts are provided by residues 160-162 and 214-218; these read GDG and RMIKE. Residue lysine 299 is modified to N6-acetyllysine. 305 to 310 is an ATP binding site; it reads GGSTMY. Position 322 is an N6-acetyllysine (lysine 322).

Belongs to the actin family. ARP2 subfamily. Component of the Arp2/3 complex composed of ACTR2/ARP2, ACTR3/ARP3, ARPC1B/p41-ARC, ARPC2/p34-ARC, ARPC3/p21-ARC, ARPC4/p20-ARC and ARPC5/p16-ARC. Interacts with AVIL.

Its subcellular location is the cytoplasm. It localises to the cytoskeleton. It is found in the cell projection. The protein resides in the nucleus. Its function is as follows. ATP-binding component of the Arp2/3 complex, a multiprotein complex that mediates actin polymerization upon stimulation by nucleation-promoting factor (NPF). The Arp2/3 complex mediates the formation of branched actin networks in the cytoplasm, providing the force for cell motility. Seems to contact the pointed end of the daughter actin filament. In podocytes, required for the formation of lamellipodia downstream of AVIL and PLCE1 regulation. In addition to its role in the cytoplasmic cytoskeleton, the Arp2/3 complex also promotes actin polymerization in the nucleus, thereby regulating gene transcription and repair of damaged DNA. The Arp2/3 complex promotes homologous recombination (HR) repair in response to DNA damage by promoting nuclear actin polymerization, leading to drive motility of double-strand breaks (DSBs). This chain is Actin-related protein 2 (ACTR2), found in Bos taurus (Bovine).